A 280-amino-acid chain; its full sequence is Orotidine 5'-phosphate decarboxylase (280 aa).

K97 (proton donor) is an active-site residue.

This sequence belongs to the OMP decarboxylase family. Type 2 subfamily.

The catalysed reaction is orotidine 5'-phosphate + H(+) = UMP + CO2. It participates in pyrimidine metabolism; UMP biosynthesis via de novo pathway; UMP from orotate: step 2/2. The protein is Orotidine 5'-phosphate decarboxylase (pyrF) of Corynebacterium efficiens (strain DSM 44549 / YS-314 / AJ 12310 / JCM 11189 / NBRC 100395).